A 286-amino-acid polypeptide reads, in one-letter code: ATP synthase gamma chain (286 aa).

This sequence belongs to the ATPase gamma chain family. In terms of assembly, F-type ATPases have 2 components, CF(1) - the catalytic core - and CF(0) - the membrane proton channel. CF(1) has five subunits: alpha(3), beta(3), gamma(1), delta(1), epsilon(1). CF(0) has three main subunits: a, b and c.

It is found in the cell inner membrane. Its function is as follows. Produces ATP from ADP in the presence of a proton gradient across the membrane. The gamma chain is believed to be important in regulating ATPase activity and the flow of protons through the CF(0) complex. In Alcanivorax borkumensis (strain ATCC 700651 / DSM 11573 / NCIMB 13689 / SK2), this protein is ATP synthase gamma chain.